The chain runs to 350 residues: Purine-binding protein BAB2_0673 (350 aa).

The signal sequence occupies residues 1–17; that stretch reads MVIATVAGFMLGGAAHA. Residues Trp36, Trp185, and Asp211 each coordinate adenine.

It belongs to the BMP lipoprotein family.

Functionally, binds adenine and probably also other purines, such as guanine. May play a role in adenine and guanine uptake. May be part of an ABC-type uptake system for adenine and similar ligands. The chain is Purine-binding protein BAB2_0673 from Brucella abortus (strain 2308).